Reading from the N-terminus, the 361-residue chain is Putative dual-specificity RNA methyltransferase RlmN (361 aa).

Catalysis depends on Glu-91, which acts as the Proton acceptor. Residues 97–329 (QHYGLSVCVT…KKKGVNCVVR (233 aa)) enclose the Radical SAM core domain. Residues Cys-111, Cys-115, and Cys-118 each coordinate [4Fe-4S] cluster. S-adenosyl-L-methionine is bound by residues 163–164 (GE), Ser-195, 218–220 (SLH), and Thr-296.

The protein belongs to the radical SAM superfamily. RlmN family. [4Fe-4S] cluster serves as cofactor.

It is found in the cytoplasm. The catalysed reaction is adenosine(2503) in 23S rRNA + 2 reduced [2Fe-2S]-[ferredoxin] + 2 S-adenosyl-L-methionine = 2-methyladenosine(2503) in 23S rRNA + 5'-deoxyadenosine + L-methionine + 2 oxidized [2Fe-2S]-[ferredoxin] + S-adenosyl-L-homocysteine. It catalyses the reaction adenosine(37) in tRNA + 2 reduced [2Fe-2S]-[ferredoxin] + 2 S-adenosyl-L-methionine = 2-methyladenosine(37) in tRNA + 5'-deoxyadenosine + L-methionine + 2 oxidized [2Fe-2S]-[ferredoxin] + S-adenosyl-L-homocysteine. In terms of biological role, specifically methylates position 2 of adenine 2503 in 23S rRNA and position 2 of adenine 37 in tRNAs. The sequence is that of Putative dual-specificity RNA methyltransferase RlmN from Streptococcus pneumoniae (strain CGSP14).